The chain runs to 432 residues: Diaminopimelate decarboxylase (432 aa).

At K66 the chain carries N6-(pyridoxal phosphate)lysine. Pyridoxal 5'-phosphate-binding positions include G248 and 290 to 293 (EPGR). 3 residues coordinate substrate: R293, R330, and Y334. The Proton donor role is filled by C361. 2 residues coordinate substrate: E362 and Y390. A pyridoxal 5'-phosphate-binding site is contributed by Y390.

The protein belongs to the Orn/Lys/Arg decarboxylase class-II family. LysA subfamily. As to quaternary structure, homodimer. Pyridoxal 5'-phosphate is required as a cofactor.

The enzyme catalyses meso-2,6-diaminopimelate + H(+) = L-lysine + CO2. It functions in the pathway amino-acid biosynthesis; L-lysine biosynthesis via DAP pathway; L-lysine from DL-2,6-diaminopimelate: step 1/1. Its function is as follows. Specifically catalyzes the decarboxylation of meso-diaminopimelate (meso-DAP) to L-lysine. This Bacillus methanolicus protein is Diaminopimelate decarboxylase.